Here is a 570-residue protein sequence, read N- to C-terminus: Proline--tRNA ligase (570 aa).

Belongs to the class-II aminoacyl-tRNA synthetase family. ProS type 1 subfamily. In terms of assembly, homodimer.

The protein localises to the cytoplasm. It carries out the reaction tRNA(Pro) + L-proline + ATP = L-prolyl-tRNA(Pro) + AMP + diphosphate. In terms of biological role, catalyzes the attachment of proline to tRNA(Pro) in a two-step reaction: proline is first activated by ATP to form Pro-AMP and then transferred to the acceptor end of tRNA(Pro). As ProRS can inadvertently accommodate and process non-cognate amino acids such as alanine and cysteine, to avoid such errors it has two additional distinct editing activities against alanine. One activity is designated as 'pretransfer' editing and involves the tRNA(Pro)-independent hydrolysis of activated Ala-AMP. The other activity is designated 'posttransfer' editing and involves deacylation of mischarged Ala-tRNA(Pro). The misacylated Cys-tRNA(Pro) is not edited by ProRS. The protein is Proline--tRNA ligase of Pelotomaculum thermopropionicum (strain DSM 13744 / JCM 10971 / SI).